Reading from the N-terminus, the 460-residue chain is Zinc transporter 6 (460 aa).

Residues 1-33 lie on the Cytoplasmic side of the membrane; it reads MGTIHLFRKPQRSFFGKLLQEFRLVAADRRSWK. A helical membrane pass occupies residues 34 to 54; that stretch reads ILLFGAINVLCTGFLLMWCSS. Residues 55–64 lie on the Extracellular side of the membrane; it reads TNSIALTAYT. Residues 65–85 form a helical membrane-spanning segment; the sequence is YLTIFDLFSLITCLISYWVMM. Over 86-98 the chain is Cytoplasmic; it reads RKPSPVYSFGFER. A helical transmembrane segment spans residues 99-119; it reads LEVLAVFASTVLAQLGALFIL. At 120–134 the chain is on the extracellular side; it reads KESAERFLEQPEIHT. Residues 135–155 form a helical membrane-spanning segment; it reads GRLLVGTFVALSFNLFTMLSI. Topologically, residues 156–200 are cytoplasmic; it reads RNKPFAYVSEAASTSWLQEHVADLSRSLCGLIPGLSSIFLPRMNP. Residues 201 to 221 traverse the membrane as a helical segment; the sequence is FVLIDLAGAFALCITYMLIEI. Residues 222–223 lie on the Extracellular side of the membrane; it reads NN. A helical membrane pass occupies residues 224–244; the sequence is YFAVDTASAIAIALMTFGTMY. Residues 245 to 460 are Cytoplasmic-facing; sequence PMSVYSGKVL…GINRMGQPRP (216 aa). The tract at residues 371–390 is disordered; the sequence is TPVTSTPAKPSSPPPEFSFN.

This sequence belongs to the cation diffusion facilitator (CDF) transporter (TC 2.A.4) family. SLC30A subfamily. As to quaternary structure, heterodimer with SLC30A5; form a functional zinc ion transmembrane transporter. In terms of tissue distribution, expressed in brain and liver, and to a lower extent also in lung. Highly expressed in brain (at protein level).

The protein localises to the golgi apparatus. The protein resides in the trans-Golgi network membrane. In terms of biological role, has probably no intrinsic transporter activity but together with SLC30A5 forms a functional zinc ion:proton antiporter heterodimer, mediating zinc entry into the lumen of organelles along the secretory pathway. As part of that zinc ion:proton antiporter, contributes to zinc ion homeostasis within the early secretory pathway and regulates the activation and folding of enzymes like alkaline phosphatases and enzymes involved in phosphatidylinositol glycan anchor biosynthesis. In Mus musculus (Mouse), this protein is Zinc transporter 6 (Slc30a6).